An 84-amino-acid chain; its full sequence is Putative membrane protein insertion efficiency factor (84 aa).

The tract at residues 63 to 84 is disordered; that stretch reads WGGSGYDPVPGADPEHDRRPRG. The segment covering 75–84 has biased composition (basic and acidic residues); that stretch reads DPEHDRRPRG.

Belongs to the UPF0161 family.

The protein localises to the cell inner membrane. In terms of biological role, could be involved in insertion of integral membrane proteins into the membrane. The sequence is that of Putative membrane protein insertion efficiency factor from Cereibacter sphaeroides (strain ATCC 17029 / ATH 2.4.9) (Rhodobacter sphaeroides).